Reading from the N-terminus, the 610-residue chain is Propanediol dehydratase-reactivating factor large subunit (610 aa).

11–13 (NSS) lines the ATP pocket. Mg(2+) contacts are provided by Thr-105, Asp-166, and Asp-183. ATP is bound by residues 459 to 462 (EEIK), 557 to 558 (GS), and Arg-591.

Belongs to the DdrA/PduG family. As to quaternary structure, forms a heterotetramer PduG(2)/PduH(2). Mg(2+) serves as cofactor.

It is found in the bacterial microcompartment. It catalyses the reaction ATP + H2O = ADP + phosphate + H(+). It participates in polyol metabolism; 1,2-propanediol degradation. Its function is as follows. Large subunit of the propanediol dehydratase-reactivating factor (DDR), which reactivates suicidally inhibited adenosylcobalamin-dependent propanediol dehydratase (diol dehydratase, DDH) found in the bacterial microcompartment (BMC) dedicated to 1,2-propanediol (1,2-PD) degradation. Reactivates inactivated DDH in the presence of ATP, Mg(2+) and free adenosylcobalamin (AdoCbl), by mediating the exchange of the tightly bound damaged cofactor AdoCbl for a free intact one. This subunit contains the adenosine nucleotide binding site. In terms of biological role, the 1,2-PD-specific bacterial microcompartment (BMC) concentrates low levels of 1,2-PD catabolic enzymes, concentrates volatile reaction intermediates thus enhancing pathway flux and keeps the level of toxic, mutagenic propionaldehyde low. In Salmonella typhimurium (strain LT2 / SGSC1412 / ATCC 700720), this protein is Propanediol dehydratase-reactivating factor large subunit.